A 156-amino-acid polypeptide reads, in one-letter code: MSRRHKAEKREINPDPKFGDLVITKFMNAVMLHGKKSVAESIVYGALDAIEATAKSEPVALFHQALDNVAPHIEVRSRRVGGATYQVPVDVRPERRQALAIRWLINAARGRNETTMVDRLSGELLDAANNRGSAVKKREDTHRMAEANRAFSHYRW.

This sequence belongs to the universal ribosomal protein uS7 family. Part of the 30S ribosomal subunit. Contacts proteins S9 and S11.

One of the primary rRNA binding proteins, it binds directly to 16S rRNA where it nucleates assembly of the head domain of the 30S subunit. Is located at the subunit interface close to the decoding center, probably blocks exit of the E-site tRNA. The chain is Small ribosomal subunit protein uS7 from Brucella melitensis biotype 1 (strain ATCC 23456 / CCUG 17765 / NCTC 10094 / 16M).